We begin with the raw amino-acid sequence, 413 residues long: Mitochondrial carrier protein MTM1 (413 aa).

Solcar repeat units follow at residues isoleucine 59–arginine 193, methionine 205–arginine 305, and glycine 318–valine 406. A run of 6 helical transmembrane segments spans residues valine 65–valine 85, asparagine 170–phenylalanine 190, alanine 204–tyrosine 226, glutamine 284–lysine 304, leucine 316–alanine 336, and leucine 378–phenylalanine 399.

The protein belongs to the mitochondrial carrier (TC 2.A.29) family. In terms of tissue distribution, ubiquitous.

It localises to the mitochondrion inner membrane. Functionally, involved in the mitochondrial activation of MSD1 by specifically facilitating insertion of the essential manganese cofactor. Has the ability to activate iron regulon in an iron-dependent manner. The chain is Mitochondrial carrier protein MTM1 (MTM1) from Arabidopsis thaliana (Mouse-ear cress).